The primary structure comprises 491 residues: Phosphatidylglycerol--prolipoprotein diacylglyceryl transferase (491 aa).

The next 3 membrane-spanning stretches (helical) occupy residues 24–44, 58–78, and 98–118; these read IPLR…IWWG, VLDV…AYHV, and IWQG…GAWI. Arg146 contacts a 1,2-diacyl-sn-glycero-3-phospho-(1'-sn-glycerol). The next 2 membrane-spanning stretches (helical) occupy residues 192–212 and 256–276; these read IVHP…IALV and INNF…VFAT. Residues 309-323 are compositionally biased toward low complexity; sequence NGPAEPGATASTATD. Residues 309-491 form a disordered region; sequence NGPAEPGATA…DRVDSGENDA (183 aa). Residues 347 to 360 show a composition bias toward basic and acidic residues; it reads KGDRGTADAADTAK. Composition is skewed to low complexity over residues 361–387, 394–406, and 415–438; these read DASA…GSSD, AVKA…AAEK, and AGEA…SAKS. A compositionally biased stretch (basic and acidic residues) spans 453–462; it reads NESESTRDNE. Residues 463 to 481 show a composition bias toward low complexity; that stretch reads STSAGTAASATGSAGAGAT. A compositionally biased stretch (basic and acidic residues) spans 482–491; sequence DRVDSGENDA.

It belongs to the Lgt family.

The protein resides in the cell membrane. It catalyses the reaction L-cysteinyl-[prolipoprotein] + a 1,2-diacyl-sn-glycero-3-phospho-(1'-sn-glycerol) = an S-1,2-diacyl-sn-glyceryl-L-cysteinyl-[prolipoprotein] + sn-glycerol 1-phosphate + H(+). The protein operates within protein modification; lipoprotein biosynthesis (diacylglyceryl transfer). Functionally, catalyzes the transfer of the diacylglyceryl group from phosphatidylglycerol to the sulfhydryl group of the N-terminal cysteine of a prolipoprotein, the first step in the formation of mature lipoproteins. The chain is Phosphatidylglycerol--prolipoprotein diacylglyceryl transferase from Nocardia farcinica (strain IFM 10152).